Consider the following 288-residue polypeptide: MKDRTQELRSAKDSDDEEEVVHVDRDHFMDEFFEQVEEIRGCIEKLSEDVEQVKKQHSAILAAPNPDEKTKQELEDLTADIKKTANKVRSKLKAIEQSIEQEEGLNRSSADLRIRKTQHSTLSRKFVEVMTEYNATQSKYRDRCKDRIQRQLEITGRTTTNEELEDMLESGKLAIFTDDIKMDSQMTKQALNEIETRHNEIIKLETSIRELHDMFVDMAMLVESQGEMIDRIEYNVEHSVDYVERAVSDTKKAVKYQSKARRKKIMIIICCVVLGVVLASSIGGTLGL.

Basic and acidic residues predominate over residues 1–13 (MKDRTQELRSAKD). The tract at residues 1 to 20 (MKDRTQELRSAKDSDDEEEV) is disordered. Topologically, residues 1-264 (MKDRTQELRS…KYQSKARRKK (264 aa)) are cytoplasmic. Phosphoserine is present on residues S10 and S14. A coiled-coil region spans residues 29–104 (MDEFFEQVEE…IEQSIEQEEG (76 aa)). One can recognise a t-SNARE coiled-coil homology domain in the interval 191 to 253 (LNEIETRHNE…ERAVSDTKKA (63 aa)). Residues 265 to 288 (IMIIICCVVLGVVLASSIGGTLGL) form a helical; Anchor for type IV membrane protein membrane-spanning segment.

This sequence belongs to the syntaxin family. Interacts with OTOF. Interacts with SYT6 and SYT8; the interaction is Ca(2+)-dependent. Phosphorylated by CK2.

The protein resides in the membrane. It localises to the nucleus. The protein localises to the cytoplasm. It is found in the cytoskeleton. Its subcellular location is the microtubule organizing center. The protein resides in the centrosome. It localises to the spindle. In terms of biological role, potentially involved in docking of synaptic vesicles at presynaptic active zones. May mediate Ca(2+)-regulation of exocytosis acrosomal reaction in sperm. The sequence is that of Syntaxin-1B (STX1B) from Homo sapiens (Human).